The chain runs to 266 residues: Electron transfer flavoprotein subunit beta (266 aa).

Belongs to the ETF beta-subunit/FixA family. Heterodimer of an alpha and a beta subunit. FAD serves as cofactor. It depends on AMP as a cofactor.

In terms of biological role, the electron transfer flavoprotein serves as a specific electron acceptor for other dehydrogenases. It transfers the electrons to the main respiratory chain via ETF-ubiquinone oxidoreductase (ETF dehydrogenase). The sequence is that of Electron transfer flavoprotein subunit beta (etfB) from Mycobacterium bovis (strain ATCC BAA-935 / AF2122/97).